The following is a 386-amino-acid chain: S-adenosylmethionine:tRNA ribosyltransferase-isomerase (386 aa).

This sequence belongs to the QueA family. Monomer.

The protein resides in the cytoplasm. It carries out the reaction 7-aminomethyl-7-carbaguanosine(34) in tRNA + S-adenosyl-L-methionine = epoxyqueuosine(34) in tRNA + adenine + L-methionine + 2 H(+). The protein operates within tRNA modification; tRNA-queuosine biosynthesis. Transfers and isomerizes the ribose moiety from AdoMet to the 7-aminomethyl group of 7-deazaguanine (preQ1-tRNA) to give epoxyqueuosine (oQ-tRNA). This is S-adenosylmethionine:tRNA ribosyltransferase-isomerase from Rickettsia canadensis (strain McKiel).